A 485-amino-acid chain; its full sequence is WD repeat-containing protein 13 (485 aa).

Position 1 is an N-acetylmethionine (Met1). A phosphoserine mark is found at Ser70, Ser74, and Ser79. Arg114 is modified (asymmetric dimethylarginine; alternate). The residue at position 114 (Arg114) is an Omega-N-methylarginine; alternate. WD repeat units follow at residues 162–202 (GMYH…LCQL), 208–246 (TVLR…IWAS), 250–290 (RCIR…VMNI), 295–335 (KVKG…LFDM), 341–389 (TKAK…VVDN), 394–438 (QLKR…FFDV), and 444–482 (AAVN…VWRR).

Widely expressed.

It is found in the nucleus. This is WD repeat-containing protein 13 (WDR13) from Homo sapiens (Human).